Reading from the N-terminus, the 77-residue chain is UPF0291 protein Bsph_1689 (77 aa).

The protein belongs to the UPF0291 family.

It localises to the cytoplasm. This chain is UPF0291 protein Bsph_1689, found in Lysinibacillus sphaericus (strain C3-41).